We begin with the raw amino-acid sequence, 366 residues long: 3-dehydroquinate synthase (366 aa).

NAD(+) is bound by residues 71-76 (DGEKYK), 105-109 (GVIGD), 129-130 (TT), Lys142, Lys151, and 169-172 (TLQT). 3 residues coordinate Zn(2+): Glu184, His247, and His264.

The protein belongs to the sugar phosphate cyclases superfamily. Dehydroquinate synthase family. Co(2+) serves as cofactor. Requires Zn(2+) as cofactor. NAD(+) is required as a cofactor.

It localises to the cytoplasm. The enzyme catalyses 7-phospho-2-dehydro-3-deoxy-D-arabino-heptonate = 3-dehydroquinate + phosphate. Its pathway is metabolic intermediate biosynthesis; chorismate biosynthesis; chorismate from D-erythrose 4-phosphate and phosphoenolpyruvate: step 2/7. Catalyzes the conversion of 3-deoxy-D-arabino-heptulosonate 7-phosphate (DAHP) to dehydroquinate (DHQ). The sequence is that of 3-dehydroquinate synthase from Actinobacillus pleuropneumoniae serotype 5b (strain L20).